The chain runs to 110 residues: MHEMSITQSVVEICEVHAAGRKVTEVVLLIGELSGVVPESVEFCFEACSKGTLLEGARLQLELVLGVGSCPACHGEFPISTLFEPCPGCGAFGLSVVAGEELRVKELELE.

His2 is a Ni(2+) binding site. Cys70, Cys73, Cys86, and Cys89 together coordinate Zn(2+).

The protein belongs to the HypA/HybF family.

In terms of biological role, involved in the maturation of [NiFe] hydrogenases. Required for nickel insertion into the metal center of the hydrogenase. The sequence is that of Hydrogenase maturation factor HypA from Geobacter sp. (strain M21).